A 627-amino-acid polypeptide reads, in one-letter code: Putative polyketide hydroxylase (627 aa).

Residues 22–51 and 309–319 contribute to the FAD site; these read PVLV…LVER and YRSGRVLLAGD. A disordered region spans residues 370–469; that stretch reads AEATSARAAH…GGGPGGGGPQ (100 aa). The span at 395-469 shows a compositional bias: gly residues; it reads AGGGGPGAGT…GGGPGGGGPQ (75 aa).

The protein belongs to the PheA/TfdB FAD monooxygenase family. The cofactor is FAD.

Functionally, involved in developmentally regulated synthesis of a compound biosynthetically related to polyketide antibiotics which is essential for spore color in Streptococcus coelicolor. The sequence is that of Putative polyketide hydroxylase from Streptomyces coelicolor (strain ATCC BAA-471 / A3(2) / M145).